Consider the following 985-residue polypeptide: UPF0182 protein Cgl0786/cg0896 (985 aa).

7 consecutive transmembrane segments (helical) span residues 19-39, 63-83, 115-135, 176-196, 215-235, 262-282, and 290-310; these read VTWI…SVGF, IVLF…AGYF, VMVI…QRSW, SMML…MGGI, TQLA…YWLD, KIIL…AIFL, and LAVV…PLML. The tract at residues 904–944 is disordered; it reads KEAQDIEEVDGTATTPSTDETDTDTDQPATETPTAPVSEAE. The segment covering 929–939 has biased composition (low complexity); the sequence is DQPATETPTAP.

This sequence belongs to the UPF0182 family.

The protein localises to the cell membrane. The polypeptide is UPF0182 protein Cgl0786/cg0896 (Corynebacterium glutamicum (strain ATCC 13032 / DSM 20300 / JCM 1318 / BCRC 11384 / CCUG 27702 / LMG 3730 / NBRC 12168 / NCIMB 10025 / NRRL B-2784 / 534)).